Here is a 198-residue protein sequence, read N- to C-terminus: Na(+)-translocating NADH-quinone reductase subunit E (198 aa).

The next 6 membrane-spanning stretches (helical) occupy residues 11–31, 39–59, 77–97, 110–130, 140–160, and 176–196; these read SIFI…FLAV, MGLG…NNLI, FLSF…LEMA, GIFL…SFMV, VVYG…MAGI, and LGIT…FSGI.

It belongs to the NqrDE/RnfAE family. In terms of assembly, composed of six subunits; NqrA, NqrB, NqrC, NqrD, NqrE and NqrF.

The protein resides in the cell inner membrane. It catalyses the reaction a ubiquinone + n Na(+)(in) + NADH + H(+) = a ubiquinol + n Na(+)(out) + NAD(+). Functionally, NQR complex catalyzes the reduction of ubiquinone-1 to ubiquinol by two successive reactions, coupled with the transport of Na(+) ions from the cytoplasm to the periplasm. NqrA to NqrE are probably involved in the second step, the conversion of ubisemiquinone to ubiquinol. The sequence is that of Na(+)-translocating NADH-quinone reductase subunit E from Aeromonas hydrophila subsp. hydrophila (strain ATCC 7966 / DSM 30187 / BCRC 13018 / CCUG 14551 / JCM 1027 / KCTC 2358 / NCIMB 9240 / NCTC 8049).